The sequence spans 214 residues: Pyrrolidone-carboxylate peptidase (214 aa).

Catalysis depends on residues E80, C143, and H166.

The protein belongs to the peptidase C15 family. Homotetramer.

It is found in the cytoplasm. The enzyme catalyses Release of an N-terminal pyroglutamyl group from a polypeptide, the second amino acid generally not being Pro.. Removes 5-oxoproline from various penultimate amino acid residues except L-proline. The polypeptide is Pyrrolidone-carboxylate peptidase (Klebsiella pneumoniae (strain 342)).